The following is a 220-amino-acid chain: 7-cyano-7-deazaguanine synthase (220 aa).

An ATP-binding site is contributed by 11-21 (VSGGMDSVTLM). The Zn(2+) site is built by Cys-186, Cys-194, Cys-197, and Cys-200.

It belongs to the QueC family. Zn(2+) is required as a cofactor.

It carries out the reaction 7-carboxy-7-deazaguanine + NH4(+) + ATP = 7-cyano-7-deazaguanine + ADP + phosphate + H2O + H(+). It functions in the pathway purine metabolism; 7-cyano-7-deazaguanine biosynthesis. Catalyzes the ATP-dependent conversion of 7-carboxy-7-deazaguanine (CDG) to 7-cyano-7-deazaguanine (preQ(0)). This is 7-cyano-7-deazaguanine synthase from Porphyromonas gingivalis (strain ATCC BAA-308 / W83).